We begin with the raw amino-acid sequence, 740 residues long: DNA polymerase iota (740 aa).

The tract at residues 1–21 (MEKLGVEPEEEGGGDDDEEDA) is disordered. A compositionally biased stretch (acidic residues) spans 7–21 (EPEEEGGGDDDEEDA). Residues 55 to 268 (IVHVDLDCFY…NHIKEIPGIG (214 aa)) enclose the UmuC domain. Residues aspartate 59 and leucine 60 each contribute to the Mg(2+) site. Mn(2+)-binding residues include aspartate 59 and leucine 60. A 2'-deoxyribonucleoside 5'-triphosphate contacts are provided by tyrosine 64 and arginine 96. Aspartate 151 is a binding site for Mg(2+). A Mn(2+)-binding site is contributed by aspartate 151. The Proton acceptor role is filled by glutamate 152. DNA-binding regions lie at residues 249-314 (ESCQ…FGED) and 325-439 (QSFS…CNLK). The Ubiquitin-binding 1 (UBM1) signature appears at 527–544 (VDQEVFKQLPVDIQEEIL). 2 disordered regions span residues 581–615 (PINPRDHLSSSKQVSSVSPCEPGTSGFNSSSSSYM) and 671–704 (NHTTDSHKQTVATDSHEGLTENREPDSVDEKITF). The span at 605 to 615 (SGFNSSSSSYM) shows a compositional bias: low complexity. A compositionally biased stretch (basic and acidic residues) spans 672-702 (HTTDSHKQTVATDSHEGLTENREPDSVDEKI). A Ubiquitin-binding 2 (UBM2) motif is present at residues 708 to 725 (IDPQVFYELPEAVQKELL).

Belongs to the DNA polymerase type-Y family. Interacts with POLH. Interacts with REV1. Interacts with ubiquitin. The cofactor is Mg(2+). Mn(2+) is required as a cofactor. Monoubiquitinated. Protein monoubiquitination prevents POLI binding to ubiquitin via the ubiquitin-binding motif 1 and ubiquitin-binding motif 2. Ubiquitous. Highly expressed in testis.

Its subcellular location is the nucleus. The enzyme catalyses DNA(n) + a 2'-deoxyribonucleoside 5'-triphosphate = DNA(n+1) + diphosphate. Error-prone DNA polymerase specifically involved in DNA repair. Plays an important role in translesion synthesis, where the normal high-fidelity DNA polymerases cannot proceed and DNA synthesis stalls. Favors Hoogsteen base-pairing in the active site. Inserts the correct base with high-fidelity opposite an adenosine template. Exhibits low fidelity and efficiency opposite a thymidine template, where it will preferentially insert guanosine. May play a role in hypermutation of immunoglobulin genes. Forms a Schiff base with 5'-deoxyribose phosphate at abasic sites, but may not have lyase activity. The protein is DNA polymerase iota (POLI) of Homo sapiens (Human).